A 475-amino-acid polypeptide reads, in one-letter code: tRNA (guanine(37)-N(1))-methyltransferase (475 aa).

S-adenosyl-L-methionine is bound by residues H219, 258–259, and 286–287; these read DL and DG. Residues 306-328 form a disordered region; sequence KITKQKPTSNDKKRNRKVESPTV. N349 serves as a coordination point for S-adenosyl-L-methionine. The segment covering 456 to 469 has biased composition (polar residues); that stretch reads NLVSQSDVSKSSDN. The interval 456–475 is disordered; that stretch reads NLVSQSDVSKSSDNILEKDT.

Belongs to the class I-like SAM-binding methyltransferase superfamily. TRM5/TYW2 family. Monomer.

The protein resides in the mitochondrion matrix. The protein localises to the nucleus. Its subcellular location is the cytoplasm. It catalyses the reaction guanosine(37) in tRNA + S-adenosyl-L-methionine = N(1)-methylguanosine(37) in tRNA + S-adenosyl-L-homocysteine + H(+). Specifically methylates the N1 position of guanosine-37 in various cytoplasmic and mitochondrial tRNAs. Methylation is not dependent on the nature of the nucleoside 5' of the target nucleoside. This is the first step in the biosynthesis of wybutosine (yW), a modified base adjacent to the anticodon of tRNAs and required for accurate decoding. This is tRNA (guanine(37)-N(1))-methyltransferase from Batrachochytrium dendrobatidis (strain JAM81 / FGSC 10211) (Frog chytrid fungus).